Here is a 571-residue protein sequence, read N- to C-terminus: Dual specificity testis-specific protein kinase 2 (571 aa).

The region spanning 58–313 is the Protein kinase domain; it reads DFTCEKIGSG…EIGKTLEEIL (256 aa). ATP-binding positions include 64–72 and K87; that span reads IGSGFFSEV. D176 functions as the Proton acceptor in the catalytic mechanism. S219 is subject to Phosphoserine; by autocatalysis. 3 positions are modified to phosphoserine: S369, S456, and S460. Positions 521-571 are disordered; it reads ENGFGSRPQGTSPCPAGASEEMEVEERPAGSTPATFSTSGIGLQTQGKQDG. Positions 552–571 are enriched in polar residues; sequence TPATFSTSGIGLQTQGKQDG.

Belongs to the protein kinase superfamily. TKL Ser/Thr protein kinase family. Mg(2+) serves as cofactor. Requires Mn(2+) as cofactor. As to expression, predominantly expressed in testis and prostate. Found predominantly in non-germinal Sertoli cells.

It localises to the nucleus. It carries out the reaction L-seryl-[protein] + ATP = O-phospho-L-seryl-[protein] + ADP + H(+). It catalyses the reaction L-threonyl-[protein] + ATP = O-phospho-L-threonyl-[protein] + ADP + H(+). The catalysed reaction is L-tyrosyl-[protein] + ATP = O-phospho-L-tyrosyl-[protein] + ADP + H(+). Activated by autophosphorylation on Ser-219. Its function is as follows. Dual specificity protein kinase activity catalyzing autophosphorylation and phosphorylation of exogenous substrates on both serine/threonine and tyrosine residues. Phosphorylates cofilin at 'Ser-3'. May play an important role in spermatogenesis. The polypeptide is Dual specificity testis-specific protein kinase 2 (TESK2) (Homo sapiens (Human)).